Reading from the N-terminus, the 579-residue chain is Laccase-4 (579 aa).

An N-terminal signal peptide occupies residues 1–28 (MTMAISSALPSPLLLAASLLLLIVQAQG). Plastocyanin-like domains follow at residues 36-152 (NVQM…PKLG) and 162-316 (KEVP…YENP). N-linked (GlcNAc...) asparagine glycans are attached at residues asparagine 41 and asparagine 82. Residues histidine 86 and histidine 88 each coordinate Cu cation. Asparagine 118 carries an N-linked (GlcNAc...) asparagine glycan. Cu cation is bound by residues histidine 131 and histidine 133. N-linked (GlcNAc...) asparagine glycans are attached at residues asparagine 191, asparagine 207, asparagine 243, asparagine 304, asparagine 340, asparagine 347, asparagine 386, asparagine 393, asparagine 403, asparagine 439, asparagine 446, and asparagine 462. The region spanning 429–563 (DFPVAPLSPF…RMAWLVLDGS (135 aa)) is the Plastocyanin-like 3 domain. Cu cation contacts are provided by histidine 480, histidine 483, histidine 485, histidine 542, cysteine 543, histidine 544, and histidine 548.

Belongs to the multicopper oxidase family. The cofactor is Cu cation.

The protein resides in the secreted. It is found in the extracellular space. The protein localises to the apoplast. It catalyses the reaction 4 hydroquinone + O2 = 4 benzosemiquinone + 2 H2O. In terms of biological role, lignin degradation and detoxification of lignin-derived products. This Oryza sativa subsp. japonica (Rice) protein is Laccase-4 (LAC4).